Consider the following 540-residue polypeptide: Probable LRR receptor-like serine/threonine-protein kinase RPK1 (540 aa).

Residues 1–19 form the signal peptide; the sequence is MKLLGLVFLLFNLFMFSFS. Residues 20–198 are Extracellular-facing; sequence RKLLTESGGG…PGKSGLYPIE (179 aa). LRR repeat units lie at residues 118-142 and 144-169; these read LSEI…IWGL and KLEI…VLRK. The chain crosses the membrane as a helical span at residues 199–219; that stretch reads IASIVSASVIVFVLLVLVILF. Residues 220–540 lie on the Cytoplasmic side of the membrane; it reads IYTRKWKRNS…LLKRIQPSRL (321 aa). A phosphothreonine mark is found at Thr250 and Thr258. Positions 261 to 535 constitute a Protein kinase domain; sequence FSNSNCIGHG…KQAVRLLKRI (275 aa). ATP contacts are provided by residues 267–275 and Lys289; that span reads IGHGGFGST. A phosphotyrosine mark is found at Tyr334 and Tyr372. The active-site Proton acceptor is Asp385. Tyr427 is subject to Phosphotyrosine. Thr435 bears the Phosphothreonine mark.

It belongs to the protein kinase superfamily. Ser/Thr protein kinase family. As to expression, expressed in roots, stems, leaves, and flowers.

It localises to the cell membrane. The catalysed reaction is L-seryl-[protein] + ATP = O-phospho-L-seryl-[protein] + ADP + H(+). It catalyses the reaction L-threonyl-[protein] + ATP = O-phospho-L-threonyl-[protein] + ADP + H(+). Its function is as follows. Involved in the main abscisic acid-mediated (ABA) signaling pathway and in early ABA perception. Together with RPK2, required for pattern formation along the radial axis (e.g. the apical embryonic domain cell types that generate cotyledon primordia), and the apical-basal axis (e.g. differentiation of the basal pole during early embryogenesis). The chain is Probable LRR receptor-like serine/threonine-protein kinase RPK1 (RPK1) from Arabidopsis thaliana (Mouse-ear cress).